A 485-amino-acid polypeptide reads, in one-letter code: ATP-dependent protease ATPase subunit HslU (485 aa).

ATP is bound by residues I22 and 64-69; that span reads GVGKTE. Positions 146–189 are disordered; that stretch reads KKTAATSAQPQDVSQASSGTTISLPSVSSTAQAEEHKAQNENDM. Over residues 149-177 the composition is skewed to polar residues; the sequence is AATSAQPQDVSQASSGTTISLPSVSSTAQ. Residues 178-189 show a composition bias toward basic and acidic residues; it reads AEEHKAQNENDM. ATP contacts are provided by D297, E363, and R435.

Belongs to the ClpX chaperone family. HslU subfamily. A double ring-shaped homohexamer of HslV is capped on each side by a ring-shaped HslU homohexamer. The assembly of the HslU/HslV complex is dependent on binding of ATP.

The protein localises to the cytoplasm. In terms of biological role, ATPase subunit of a proteasome-like degradation complex; this subunit has chaperone activity. The binding of ATP and its subsequent hydrolysis by HslU are essential for unfolding of protein substrates subsequently hydrolyzed by HslV. HslU recognizes the N-terminal part of its protein substrates and unfolds these before they are guided to HslV for hydrolysis. This is ATP-dependent protease ATPase subunit HslU from Treponema denticola (strain ATCC 35405 / DSM 14222 / CIP 103919 / JCM 8153 / KCTC 15104).